Reading from the N-terminus, the 391-residue chain is UPF0328 protein ECU06_1650 (391 aa).

It belongs to the UPF0328 family.

The sequence is that of UPF0328 protein ECU06_1650 from Encephalitozoon cuniculi (strain GB-M1) (Microsporidian parasite).